Reading from the N-terminus, the 412-residue chain is Multifunctional CCA protein (412 aa).

ATP-binding residues include Gly-8 and Arg-11. CTP-binding residues include Gly-8 and Arg-11. The Mg(2+) site is built by Asp-21 and Asp-23. ATP-binding residues include Arg-91, Arg-137, and Arg-140. Arg-91, Arg-137, and Arg-140 together coordinate CTP. One can recognise an HD domain in the interval 228–329 (TGIHTLMTLS…VKLFDSIDAW (102 aa)).

It belongs to the tRNA nucleotidyltransferase/poly(A) polymerase family. Bacterial CCA-adding enzyme type 1 subfamily. As to quaternary structure, monomer. Can also form homodimers and oligomers. Requires Mg(2+) as cofactor. Ni(2+) serves as cofactor.

The catalysed reaction is a tRNA precursor + 2 CTP + ATP = a tRNA with a 3' CCA end + 3 diphosphate. It carries out the reaction a tRNA with a 3' CCA end + 2 CTP + ATP = a tRNA with a 3' CCACCA end + 3 diphosphate. Catalyzes the addition and repair of the essential 3'-terminal CCA sequence in tRNAs without using a nucleic acid template. Adds these three nucleotides in the order of C, C, and A to the tRNA nucleotide-73, using CTP and ATP as substrates and producing inorganic pyrophosphate. tRNA 3'-terminal CCA addition is required both for tRNA processing and repair. Also involved in tRNA surveillance by mediating tandem CCA addition to generate a CCACCA at the 3' terminus of unstable tRNAs. While stable tRNAs receive only 3'-terminal CCA, unstable tRNAs are marked with CCACCA and rapidly degraded. The sequence is that of Multifunctional CCA protein from Escherichia coli O139:H28 (strain E24377A / ETEC).